Reading from the N-terminus, the 348-residue chain is Lipopolysaccharide heptosyltransferase 2 (348 aa).

The protein belongs to the glycosyltransferase 9 family.

It catalyses the reaction an L-alpha-D-Hep-(1-&gt;5)-[alpha-Kdo-(2-&gt;4)]-alpha-Kdo-(2-&gt;6)-lipid A + ADP-L-glycero-beta-D-manno-heptose = an L-alpha-D-Hep-(1-&gt;3)-L-alpha-D-Hep-(1-&gt;5)-[alpha-Kdo-(2-&gt;4)]-alpha-Kdo-(2-&gt;6)-lipid A + ADP + H(+). It participates in bacterial outer membrane biogenesis; LPS core biosynthesis. Functionally, glycosyltransferase involved in the biosynthesis of the core oligosaccharide region of lipopolysaccharide (LPS). Catalyzes the addition of the second heptose unit to the heptosyl-Kdo2-lipid A module. The chain is Lipopolysaccharide heptosyltransferase 2 from Salmonella typhimurium (strain LT2 / SGSC1412 / ATCC 700720).